The following is a 1054-amino-acid chain: Kinesin-like protein KIN-7G (1054 aa).

A Kinesin motor domain is found at 17-341; it reads KIFVSVRLRP…LLFASCAKEV (325 aa). Residue 105–112 coordinates ATP; that stretch reads GQTSSGKT. Coiled coils occupy residues 350–425 and 611–640; these read VMSD…IGEA and TETA…VSSV. Disordered stretches follow at residues 600-648 and 740-760; these read CEPE…KEKS and ERAE…PKHI. Positions 613-631 are enriched in acidic residues; sequence TAEEKEEKEETEEKEEEEE.

Belongs to the TRAFAC class myosin-kinesin ATPase superfamily. Kinesin family. KIN-7 subfamily.

The sequence is that of Kinesin-like protein KIN-7G from Arabidopsis thaliana (Mouse-ear cress).